Reading from the N-terminus, the 433-residue chain is 26S proteasome regulatory subunit 7 (433 aa).

Residues 1–23 (MPDYLGADQRKTKEEEKEDKPIR) are disordered. Residues 8–23 (DQRKTKEEEKEDKPIR) are compositionally biased toward basic and acidic residues. 216-223 (GPPGTGKT) contacts ATP.

This sequence belongs to the AAA ATPase family. In terms of processing, phosphorylated. Dephosphorylated by ublcp1 which impairs psmc2 ATPase activity and disrupts 26S proteasome assembly.

The protein localises to the cytoplasm. Its subcellular location is the nucleus. Its function is as follows. The 26S proteasome is involved in the ATP-dependent degradation of ubiquitinated proteins. The regulatory (or ATPase) complex confers ATP dependency and substrate specificity to the 26S complex. The protein is 26S proteasome regulatory subunit 7 (psmc2) of Xenopus laevis (African clawed frog).